The chain runs to 521 residues: Cell cycle checkpoint protein hpr-9 (521 aa).

Disordered stretches follow at residues methionine 1–arginine 20, glutamine 318–valine 375, and glycine 492–arginine 521. Polar residues-rich tracts occupy residues glutamate 355–serine 370 and threonine 493–glutamine 504.

Belongs to the rad9 family. Putative component of the toroidal 9-1-1 (RAD9-RAD1-HUS1) complex, composed of hpr-9, mrt-2 and hus-1.

Functionally, may be a component of the 9-1-1 cell-cycle checkpoint response complex that plays a major role in DNA repair. This is Cell cycle checkpoint protein hpr-9 from Caenorhabditis elegans.